A 151-amino-acid polypeptide reads, in one-letter code: MVNKVVAENRKARFNYEIIDTYEAGIVLMGTEVKSLREGKANIAESYASDEGGEIWLINSYLPEYLQANRFNHEPRRRRKLLLSGREIHRLRSAINREGMTLIPLKIYFNDRGRAKMELALAKGKKLHDKRESEKERDWNRQKSRLLKAHG.

The tract at residues 124–151 is disordered; that stretch reads GKKLHDKRESEKERDWNRQKSRLLKAHG. Residues 129–141 show a composition bias toward basic and acidic residues; the sequence is DKRESEKERDWNR. Residues 142–151 are compositionally biased toward basic residues; sequence QKSRLLKAHG.

Belongs to the SmpB family.

The protein localises to the cytoplasm. In terms of biological role, required for rescue of stalled ribosomes mediated by trans-translation. Binds to transfer-messenger RNA (tmRNA), required for stable association of tmRNA with ribosomes. tmRNA and SmpB together mimic tRNA shape, replacing the anticodon stem-loop with SmpB. tmRNA is encoded by the ssrA gene; the 2 termini fold to resemble tRNA(Ala) and it encodes a 'tag peptide', a short internal open reading frame. During trans-translation Ala-aminoacylated tmRNA acts like a tRNA, entering the A-site of stalled ribosomes, displacing the stalled mRNA. The ribosome then switches to translate the ORF on the tmRNA; the nascent peptide is terminated with the 'tag peptide' encoded by the tmRNA and targeted for degradation. The ribosome is freed to recommence translation, which seems to be the essential function of trans-translation. The sequence is that of SsrA-binding protein from Rhizobium johnstonii (strain DSM 114642 / LMG 32736 / 3841) (Rhizobium leguminosarum bv. viciae).